Here is a 182-residue protein sequence, read N- to C-terminus: ATP-dependent protease subunit HslV (182 aa).

Thr10 is an active-site residue. Ala166, Cys169, and Ser172 together coordinate Na(+).

This sequence belongs to the peptidase T1B family. HslV subfamily. In terms of assembly, a double ring-shaped homohexamer of HslV is capped on each side by a ring-shaped HslU homohexamer. The assembly of the HslU/HslV complex is dependent on binding of ATP.

It localises to the cytoplasm. The catalysed reaction is ATP-dependent cleavage of peptide bonds with broad specificity.. Allosterically activated by HslU binding. Functionally, protease subunit of a proteasome-like degradation complex believed to be a general protein degrading machinery. The sequence is that of ATP-dependent protease subunit HslV from Rickettsia bellii (strain OSU 85-389).